Reading from the N-terminus, the 105-residue chain is Large ribosomal subunit protein uL24 (105 aa).

The protein belongs to the universal ribosomal protein uL24 family. As to quaternary structure, part of the 50S ribosomal subunit.

One of two assembly initiator proteins, it binds directly to the 5'-end of the 23S rRNA, where it nucleates assembly of the 50S subunit. In terms of biological role, one of the proteins that surrounds the polypeptide exit tunnel on the outside of the subunit. The polypeptide is Large ribosomal subunit protein uL24 (Novosphingobium aromaticivorans (strain ATCC 700278 / DSM 12444 / CCUG 56034 / CIP 105152 / NBRC 16084 / F199)).